The following is a 215-amino-acid chain: Glutaredoxin 2 (215 aa).

One can recognise a GST N-terminal domain in the interval 1–77 (MKLYIYDHCP…YVDKLDGKPL (77 aa)). A disulfide bridge connects residues cysteine 9 and cysteine 12.

It belongs to the glutaredoxin family.

Involved in reducing some disulfides in a coupled system with glutathione reductase. Does not act as hydrogen donor for ribonucleotide reductase. The protein is Glutaredoxin 2 (grxB) of Escherichia coli O157:H7.